The chain runs to 322 residues: Phosphatidylserine decarboxylase proenzyme (322 aa).

Catalysis depends on charge relay system; for autoendoproteolytic cleavage activity residues Asp-90, His-147, and Ser-254. Ser-254 functions as the Schiff-base intermediate with substrate; via pyruvic acid; for decarboxylase activity in the catalytic mechanism. A Pyruvic acid (Ser); by autocatalysis modification is found at Ser-254. Residues 296–322 (EPAPLPAEEIKAEHDASPLVDNKKDDT) are disordered. Positions 303-322 (EEIKAEHDASPLVDNKKDDT) are enriched in basic and acidic residues.

Belongs to the phosphatidylserine decarboxylase family. PSD-B subfamily. Prokaryotic type I sub-subfamily. In terms of assembly, heterodimer of a large membrane-associated beta subunit and a small pyruvoyl-containing alpha subunit. Pyruvate is required as a cofactor. Is synthesized initially as an inactive proenzyme. Formation of the active enzyme involves a self-maturation process in which the active site pyruvoyl group is generated from an internal serine residue via an autocatalytic post-translational modification. Two non-identical subunits are generated from the proenzyme in this reaction, and the pyruvate is formed at the N-terminus of the alpha chain, which is derived from the carboxyl end of the proenzyme. The autoendoproteolytic cleavage occurs by a canonical serine protease mechanism, in which the side chain hydroxyl group of the serine supplies its oxygen atom to form the C-terminus of the beta chain, while the remainder of the serine residue undergoes an oxidative deamination to produce ammonia and the pyruvoyl prosthetic group on the alpha chain. During this reaction, the Ser that is part of the protease active site of the proenzyme becomes the pyruvoyl prosthetic group, which constitutes an essential element of the active site of the mature decarboxylase.

The protein localises to the cell membrane. The catalysed reaction is a 1,2-diacyl-sn-glycero-3-phospho-L-serine + H(+) = a 1,2-diacyl-sn-glycero-3-phosphoethanolamine + CO2. Its pathway is phospholipid metabolism; phosphatidylethanolamine biosynthesis; phosphatidylethanolamine from CDP-diacylglycerol: step 2/2. In terms of biological role, catalyzes the formation of phosphatidylethanolamine (PtdEtn) from phosphatidylserine (PtdSer). In Salmonella dublin (strain CT_02021853), this protein is Phosphatidylserine decarboxylase proenzyme.